Consider the following 354-residue polypeptide: Homeobox protein Nkx-2.4 (354 aa).

Residues 189 to 248 constitute a DNA-binding region (homeobox); that stretch reads RRKRRVLFSQAQVYELERRFKQQKYLSAPEREHLASMIHLTPTQVKIWFQNHRYKMKRQA. The tract at residues 246 to 329 is disordered; that stretch reads RQAKDKAAQQ…PALHGPGGGL (84 aa). The segment covering 263–272 has biased composition (pro residues); it reads GPPPPPPPSP.

This sequence belongs to the NK-2 homeobox family.

It localises to the nucleus. Functionally, probable transcription factor. This is Homeobox protein Nkx-2.4 (NKX2-4) from Homo sapiens (Human).